A 215-amino-acid chain; its full sequence is UPF0502 protein YceH (215 aa).

Lys80 is modified (N6-acetyllysine).

It belongs to the UPF0502 family.

The sequence is that of UPF0502 protein YceH from Escherichia coli O127:H6 (strain E2348/69 / EPEC).